Reading from the N-terminus, the 559-residue chain is MEVIHAWSAPRSLSTTLMYSFAQRDDIEVLDEPLYAAFLKSTGVDRPYKDELLSKMECDGEKVVKDIIYGPGKKKYRFCKHISKQRLLGLPSELMSEGKHFILIRNPLNILPSFEKIHPSSFHELGLGELVSIYSDLCQMGTPPAIIDADELQRDPEATLRSLCDDLEIPFQASMLKWEAGPIPEDGLWAPWWYETLHKSTGFSSPQKYPQTFPLMHYDLLEQCLPLYNILRCHMKHKSSLLSSTLPPPSLPVPENAKLLAWVGDEIVPREMAKVSVFDSVVQGGDSVWEGLRIYKGKVFKLEEHLDRLSDSAKALAFNNVPTREEIKEAIFRTLITNGMFDNTHIRLSLTRGKKVTSGMSPAFNRYGCTLIVLAEWKPPVYDNDGGIVLVTATTRRNSPNNLDSKIHHNNLLNNILAKIESNNANVDDAIMLDKDGFVSETNATNIFMVKKDRVLTPHADYCLPGITRATVMELVVKENFILEERRISLSEFHTADEVWTTGTMGELSPVVKIDGRVIGEGKVGPVTRRLQNAYKKLTDGSGVPIPTYQEVKNLEPCV.

The protein belongs to the class-IV pyridoxal-phosphate-dependent aminotransferase family.

This Arabidopsis thaliana (Mouse-ear cress) protein is Branched-chain-amino-acid aminotransferase-like protein 2.